A 644-amino-acid polypeptide reads, in one-letter code: ATP-dependent zinc metalloprotease FtsH (644 aa).

The Stromal segment spans residues 1 to 11; the sequence is MNDNKNNTVRN. The chain crosses the membrane as a helical span at residues 12 to 32; it reads LLIGIALLSGISLTAKKFDLI. The Lumenal portion of the chain corresponds to 33–128; it reads GVQGSESGKN…FDAHPAEQKN (96 aa). Residues 129 to 149 form a helical membrane-spanning segment; sequence IFVNILSNILLPIIFITGLVY. Residues 150–644 are Stromal-facing; it reads LFQNSENFGG…KNIPYVSKFN (495 aa). 226–233 is a binding site for ATP; it reads GPPGTGKT. Histidine 447 contributes to the Zn(2+) binding site. Glutamate 448 is an active-site residue. 2 residues coordinate Zn(2+): histidine 451 and aspartate 525.

The protein in the central section; belongs to the AAA ATPase family. This sequence in the C-terminal section; belongs to the peptidase M41 family. As to quaternary structure, homohexamer. Zn(2+) is required as a cofactor.

The protein localises to the plastid. The protein resides in the chloroplast thylakoid membrane. Acts as a processive, ATP-dependent zinc metallopeptidase. The chain is ATP-dependent zinc metalloprotease FtsH from Trieres chinensis (Marine centric diatom).